The primary structure comprises 341 residues: MLIAQRPTITEEPVHDTRSRFVIEPLEPGFGYTLGNSLRRTLLSSIPGAAVTSLRIDGVLHEFSTVPGAKEDVTEMILNIKELVVSSEHDDPQVIYLRKQGPCEVTAADIVAPAGVEVHNPDLHIATLNDKGKLEIEMVVERGRGYVPAAQNKLPGHEIGRIPIDSIYSPVLKVTYKVEATRVEQRTDFDRLIMDVETKPSMRPRDAMASAGKTLVELFGLVRELNVDAEGIDIGPSPSDAALAADLALPIEDLNLTVRSYNCLKREGIHTVGELVARSEADLLDIRNFGQKSIEEVKTKLAEMGLSLKDSPPGFDPGRVVYSASRSDYDEDQRYIETEQL.

Positions 1-226 (MLIAQRPTIT…ELFGLVRELN (226 aa)) are alpha N-terminal domain (alpha-NTD). The alpha C-terminal domain (alpha-CTD) stretch occupies residues 241-341 (AALAADLALP…DQRYIETEQL (101 aa)).

This sequence belongs to the RNA polymerase alpha chain family. In terms of assembly, homodimer. The RNAP catalytic core consists of 2 alpha, 1 beta, 1 beta' and 1 omega subunit. When a sigma factor is associated with the core the holoenzyme is formed, which can initiate transcription.

The catalysed reaction is RNA(n) + a ribonucleoside 5'-triphosphate = RNA(n+1) + diphosphate. DNA-dependent RNA polymerase catalyzes the transcription of DNA into RNA using the four ribonucleoside triphosphates as substrates. This is DNA-directed RNA polymerase subunit alpha from Acidothermus cellulolyticus (strain ATCC 43068 / DSM 8971 / 11B).